Here is a 197-residue protein sequence, read N- to C-terminus: Nucleoid occlusion factor SlmA (197 aa).

The 61-residue stretch at 7 to 67 (INRREHILQC…GLIEFIEESL (61 aa)) folds into the HTH tetR-type domain. Residues 30–49 (TTAKLASEVGVSEAALYRHF) constitute a DNA-binding region (H-T-H motif). Residues 110–130 (ALLGENERLRSRISSLFAKIE) are a coiled coil.

The protein belongs to the nucleoid occlusion factor SlmA family. Homodimer. Interacts with FtsZ.

It localises to the cytoplasm. Its subcellular location is the nucleoid. In terms of biological role, required for nucleoid occlusion (NO) phenomenon, which prevents Z-ring formation and cell division over the nucleoid. Acts as a DNA-associated cell division inhibitor that binds simultaneously chromosomal DNA and FtsZ, and disrupts the assembly of FtsZ polymers. SlmA-DNA-binding sequences (SBS) are dispersed on non-Ter regions of the chromosome, preventing FtsZ polymerization at these regions. This is Nucleoid occlusion factor SlmA from Shewanella sp. (strain W3-18-1).